Here is a 209-residue protein sequence, read N- to C-terminus: Methylated-DNA--protein-cysteine methyltransferase (209 aa).

Cys-5 contributes to the Zn(2+) binding site. Position 14 is a phosphoserine (Ser-14). Zn(2+) is bound by residues Cys-24 and His-29. The interval Ser-35–Glu-57 is disordered. Residue His-89 participates in Zn(2+) binding. DNA contacts are provided by Thr-99, Tyr-118, Gln-119, Asn-127, and Arg-132. Cys-149 functions as the Nucleophile; methyl group acceptor in the catalytic mechanism. Ser-155 contacts DNA. Ser-205 carries the phosphoserine modification.

The protein belongs to the MGMT family. It depends on Zn(2+) as a cofactor.

The protein localises to the nucleus. The enzyme catalyses a 6-O-methyl-2'-deoxyguanosine in DNA + L-cysteinyl-[protein] = S-methyl-L-cysteinyl-[protein] + a 2'-deoxyguanosine in DNA. It carries out the reaction a 4-O-methyl-thymidine in DNA + L-cysteinyl-[protein] = a thymidine in DNA + S-methyl-L-cysteinyl-[protein]. In terms of biological role, involved in the cellular defense against the biological effects of O6-methylguanine (O6-MeG) and O4-methylthymine (O4-MeT) in DNA. Repairs the methylated nucleobase in DNA by stoichiometrically transferring the methyl group to a cysteine residue in the enzyme. This is a suicide reaction: the enzyme is irreversibly inactivated. The chain is Methylated-DNA--protein-cysteine methyltransferase (MGMT) from Cricetulus griseus (Chinese hamster).